Reading from the N-terminus, the 159-residue chain is Phosphopantetheine adenylyltransferase (159 aa).

S8 serves as a coordination point for substrate. ATP is bound by residues 8-9 and H16; that span reads SF. Substrate is bound by residues K40, T72, and R86. Residues 87-89, E97, and 122-128 each bind ATP; these read GLR and HSFVSSS.

It belongs to the bacterial CoaD family. Homohexamer. The cofactor is Mg(2+).

Its subcellular location is the cytoplasm. It carries out the reaction (R)-4'-phosphopantetheine + ATP + H(+) = 3'-dephospho-CoA + diphosphate. It participates in cofactor biosynthesis; coenzyme A biosynthesis; CoA from (R)-pantothenate: step 4/5. Its function is as follows. Reversibly transfers an adenylyl group from ATP to 4'-phosphopantetheine, yielding dephospho-CoA (dPCoA) and pyrophosphate. In Synechococcus sp. (strain JA-3-3Ab) (Cyanobacteria bacterium Yellowstone A-Prime), this protein is Phosphopantetheine adenylyltransferase.